Consider the following 327-residue polypeptide: Olfactory receptor 51T1 (327 aa).

At 1–27 (MAIFNNTTSSSSNFLLTAFPGLECAHV) the chain is on the extracellular side. Asn-5 and Asn-6 each carry an N-linked (GlcNAc...) asparagine glycan. A helical membrane pass occupies residues 28–48 (WISIPVCCLYTIALLGNSMIF). Over 49 to 56 (LVIITKRR) the chain is Cytoplasmic. Residues 57-77 (LHKPMYYFLSMLAAVDLCLTI) traverse the membrane as a helical segment. Over 78–101 (TTLPTVLGVLWFHAREISFKACFI) the chain is Extracellular. A helical membrane pass occupies residues 102–122 (QMFFVHAFSLLESSVLVAMAF). Over 123–141 (DRFVAICNPLNYATILTDR) the chain is Cytoplasmic. The chain crosses the membrane as a helical span at residues 142-162 (MVLVIGLVICIRPAVFLLPLL). The Extracellular segment spans residues 163-198 (VAINTVSFHGGHELSHPFCYHPEVIKYTYSKPWISS). A helical transmembrane segment spans residues 199–219 (FWGLFLQLYLNGTDVLFILFS). Over 220–239 (YVLILRTVLGIVARKKQQKA) the chain is Cytoplasmic. A helical transmembrane segment spans residues 240-260 (LSTCVCHICAVTIFYVPLISL). Residues 261–275 (SLAHRLFHSTPRVLC) are Extracellular-facing. The chain crosses the membrane as a helical span at residues 276 to 296 (STLANIYLLLPPVLNPIIYSL). Over 297-327 (KTKTIRQAMFQLLQSKGSWGFNVRGLRGRWD) the chain is Cytoplasmic.

The protein belongs to the G-protein coupled receptor 1 family.

Its subcellular location is the cell membrane. In terms of biological role, odorant receptor. This chain is Olfactory receptor 51T1 (OR51T1), found in Homo sapiens (Human).